A 261-amino-acid chain; its full sequence is Cytochrome c oxidase subunit 3 (261 aa).

At 2-15 (THQTHAYHMVNPSP) the chain is on the mitochondrial matrix side. A helical membrane pass occupies residues 16–34 (WPLTGALSALLLTSGLVMW). The Mitochondrial intermembrane portion of the chain corresponds to 35 to 40 (FHYNST). A helical transmembrane segment spans residues 41–66 (ILLSLGLLTNILTMYQWWRDIIREGT). The Mitochondrial matrix portion of the chain corresponds to 67–72 (YQGHHT). Residues 73-105 (PIVQKGLRYGMILFIVSEVFFFAGFFWAFYHSS) form a helical membrane-spanning segment. At 106–128 (LVPTHDLGGCWPPTGITPLNPLE) the chain is on the mitochondrial intermembrane side. A helical transmembrane segment spans residues 129–152 (VPLLNTSVLLASGVSITWAHHSLM). Residues 153-155 (EGN) are Mitochondrial matrix-facing. The chain crosses the membrane as a helical span at residues 156–183 (RNHMNQALLITILLGLYFTILQASEYFE). Residues 184 to 190 (TSFSISD) lie on the Mitochondrial intermembrane side of the membrane. Residues 191–223 (GIYGSTFFMATGFHGLHVIIGSTFLIVCLLRQL) traverse the membrane as a helical segment. At 224–232 (KFHFTSKHH) the chain is on the mitochondrial matrix side. The chain crosses the membrane as a helical span at residues 233–256 (FGFEAAAWYWHFVDVVWLFLYVSI). Residues 257–261 (YWWGS) lie on the Mitochondrial intermembrane side of the membrane.

It belongs to the cytochrome c oxidase subunit 3 family. As to quaternary structure, component of the cytochrome c oxidase (complex IV, CIV), a multisubunit enzyme composed of 14 subunits. The complex is composed of a catalytic core of 3 subunits MT-CO1, MT-CO2 and MT-CO3, encoded in the mitochondrial DNA, and 11 supernumerary subunits COX4I, COX5A, COX5B, COX6A, COX6B, COX6C, COX7A, COX7B, COX7C, COX8 and NDUFA4, which are encoded in the nuclear genome. The complex exists as a monomer or a dimer and forms supercomplexes (SCs) in the inner mitochondrial membrane with NADH-ubiquinone oxidoreductase (complex I, CI) and ubiquinol-cytochrome c oxidoreductase (cytochrome b-c1 complex, complex III, CIII), resulting in different assemblies (supercomplex SCI(1)III(2)IV(1) and megacomplex MCI(2)III(2)IV(2)).

The protein localises to the mitochondrion inner membrane. It catalyses the reaction 4 Fe(II)-[cytochrome c] + O2 + 8 H(+)(in) = 4 Fe(III)-[cytochrome c] + 2 H2O + 4 H(+)(out). Functionally, component of the cytochrome c oxidase, the last enzyme in the mitochondrial electron transport chain which drives oxidative phosphorylation. The respiratory chain contains 3 multisubunit complexes succinate dehydrogenase (complex II, CII), ubiquinol-cytochrome c oxidoreductase (cytochrome b-c1 complex, complex III, CIII) and cytochrome c oxidase (complex IV, CIV), that cooperate to transfer electrons derived from NADH and succinate to molecular oxygen, creating an electrochemical gradient over the inner membrane that drives transmembrane transport and the ATP synthase. Cytochrome c oxidase is the component of the respiratory chain that catalyzes the reduction of oxygen to water. Electrons originating from reduced cytochrome c in the intermembrane space (IMS) are transferred via the dinuclear copper A center (CU(A)) of subunit 2 and heme A of subunit 1 to the active site in subunit 1, a binuclear center (BNC) formed by heme A3 and copper B (CU(B)). The BNC reduces molecular oxygen to 2 water molecules using 4 electrons from cytochrome c in the IMS and 4 protons from the mitochondrial matrix. This chain is Cytochrome c oxidase subunit 3, found in Rattus norvegicus (Rat).